The chain runs to 655 residues: Bifunctional lysine-specific demethylase and histidyl-hydroxylase NO66 (655 aa).

Residues 1–16 (MEKVTNSAAAKPQGNN) are compositionally biased toward polar residues. 2 disordered regions span residues 1-48 (MEKV…LSDM) and 67-122 (EDTD…QGAS). The segment covering 76 to 86 (STSSKEAAAAK) has biased composition (low complexity). A compositionally biased stretch (basic and acidic residues) spans 87–96 (TADHERRLQA). At S131 the chain carries Phosphoserine. T137 is subject to Phosphothreonine. At S138 the chain carries Phosphoserine. The segment at 185–210 (KAPEEGNNNNDEKEMSTETSEPHKTD) is disordered. Over residues 194–210 (NDEKEMSTETSEPHKTD) the composition is skewed to basic and acidic residues. A JmjC domain is found at 307-452 (CSIRLLHASA…NLLETLMPMV (146 aa)). Positions 353, 355, and 418 each coordinate Fe cation.

Belongs to the ROX family. NO66 subfamily. Fe(2+) serves as cofactor.

It localises to the nucleus. It catalyses the reaction N(6),N(6)-dimethyl-L-lysyl(36)-[histone H3] + 2 2-oxoglutarate + 2 O2 = L-lysyl(36)-[histone H3] + 2 formaldehyde + 2 succinate + 2 CO2. Its function is as follows. Oxygenase that can act as both a histone lysine demethylase and a ribosomal histidine hydroxylase. Specifically demethylates 'Lys-4' (H3K4me) and 'Lys-36' (H3K36me) of histone H3, thereby playing a central role in histone code. This chain is Bifunctional lysine-specific demethylase and histidyl-hydroxylase NO66, found in Drosophila sechellia (Fruit fly).